Reading from the N-terminus, the 276-residue chain is Ribosomal RNA small subunit methyltransferase A (276 aa).

S-adenosyl-L-methionine is bound by residues asparagine 27, leucine 29, glycine 54, glutamate 75, aspartate 101, and asparagine 122.

The protein belongs to the class I-like SAM-binding methyltransferase superfamily. rRNA adenine N(6)-methyltransferase family. RsmA subfamily.

It is found in the cytoplasm. The enzyme catalyses adenosine(1518)/adenosine(1519) in 16S rRNA + 4 S-adenosyl-L-methionine = N(6)-dimethyladenosine(1518)/N(6)-dimethyladenosine(1519) in 16S rRNA + 4 S-adenosyl-L-homocysteine + 4 H(+). Specifically dimethylates two adjacent adenosines (A1518 and A1519) in the loop of a conserved hairpin near the 3'-end of 16S rRNA in the 30S particle. May play a critical role in biogenesis of 30S subunits. The protein is Ribosomal RNA small subunit methyltransferase A of Brucella abortus biovar 1 (strain 9-941).